The sequence spans 387 residues: Phosphoglycerate kinase (387 aa).

Substrate is bound by residues 21-23 (DLN), Arg-36, and 59-62 (HLGR). Lys-84 is modified (N6-acetyllysine). 2 residues coordinate substrate: Arg-113 and Arg-146. Residues Lys-197, Glu-314, and 340-343 (GGDT) each bind ATP.

This sequence belongs to the phosphoglycerate kinase family. As to quaternary structure, monomer.

The protein localises to the cytoplasm. It catalyses the reaction (2R)-3-phosphoglycerate + ATP = (2R)-3-phospho-glyceroyl phosphate + ADP. It functions in the pathway carbohydrate degradation; glycolysis; pyruvate from D-glyceraldehyde 3-phosphate: step 2/5. The chain is Phosphoglycerate kinase from Escherichia coli O139:H28 (strain E24377A / ETEC).